The following is a 240-amino-acid chain: UPF0309 protein in nagA 3'region (240 aa).

In terms of domain architecture, SIS spans 31 to 206 (IVKRLVQGGI…CAQIIEILHE (176 aa)).

Belongs to the UPF0309 family.

In Lysinibacillus sphaericus (Bacillus sphaericus), this protein is UPF0309 protein in nagA 3'region.